The primary structure comprises 65 residues: MKWLTSFGRAVISCYKSLLLTQLRVLDRLILDHGLLRVLTCSRRVLLVQLDLVYRLAYTPTQSLA.

The polypeptide is Non-structural protein 5a (Avian infectious bronchitis virus (strain Beaudette) (IBV)).